The following is a 325-amino-acid chain: MLTGKMKLIDRVSAINWNWLQDDKDAEVWDRLTGNFWLPEKVPVSNDLPSWGTLTASEKQLTMRVFTGLTLLDTIQGTVGAVSLIPDALTPHEEAVYTNIAFMESVHAKSYSSIFSTLCSTAEIDEAFRWSEENNNLQRKAKIVMEYYRGDEPLKRKVASTLLESFLFYSGFYLPMYWSSRAKLTNTADMIRLIIRDEAVHGYYIGYKFQRGLVLVDDARRAELKEYTYELLFELYDNEVEYTQDLYDRVGLTEDVKKFLRYNANKALMNLGYEALFPRDETDVNPAILSALSPNADENHDFFSGSGSSYVIGKAVVTEDEDWDF.

The Fe cation site is built by aspartate 73, glutamate 104, and histidine 107. The active site involves tyrosine 111. Fe cation contacts are provided by glutamate 164, glutamate 198, and histidine 201.

Belongs to the ribonucleoside diphosphate reductase small chain family. As to quaternary structure, tetramer of two alpha and two beta subunits. Requires Fe cation as cofactor.

It catalyses the reaction a 2'-deoxyribonucleoside 5'-diphosphate + [thioredoxin]-disulfide + H2O = a ribonucleoside 5'-diphosphate + [thioredoxin]-dithiol. Provides the precursors necessary for DNA synthesis. Catalyzes the biosynthesis of deoxyribonucleotides from the corresponding ribonucleotides. The protein is Ribonucleoside-diphosphate reductase subunit beta (nrdF) of Mycobacterium leprae (strain TN).